The chain runs to 1235 residues: Ubiquitin carboxyl-terminal hydrolase 40 (1235 aa).

Positions 41–482 (SGIRNQGGTC…SAYMLFYRKA (442 aa)) constitute a USP domain. The Nucleophile role is filled by Cys-50. His-305 functions as the Proton acceptor in the catalytic mechanism.

The protein belongs to the peptidase C19 family.

The catalysed reaction is Thiol-dependent hydrolysis of ester, thioester, amide, peptide and isopeptide bonds formed by the C-terminal Gly of ubiquitin (a 76-residue protein attached to proteins as an intracellular targeting signal).. In Mus musculus (Mouse), this protein is Ubiquitin carboxyl-terminal hydrolase 40 (Usp40).